The primary structure comprises 332 residues: o-succinylbenzoate synthase (332 aa).

Lys135 (proton donor) is an active-site residue. Asp163, Glu192, and Asp215 together coordinate Mg(2+). Lys241 functions as the Proton acceptor in the catalytic mechanism.

It belongs to the mandelate racemase/muconate lactonizing enzyme family. MenC type 1 subfamily. Requires a divalent metal cation as cofactor.

The enzyme catalyses (1R,6R)-6-hydroxy-2-succinyl-cyclohexa-2,4-diene-1-carboxylate = 2-succinylbenzoate + H2O. The protein operates within quinol/quinone metabolism; 1,4-dihydroxy-2-naphthoate biosynthesis; 1,4-dihydroxy-2-naphthoate from chorismate: step 4/7. Its pathway is quinol/quinone metabolism; menaquinone biosynthesis. Its function is as follows. Converts 2-succinyl-6-hydroxy-2,4-cyclohexadiene-1-carboxylate (SHCHC) to 2-succinylbenzoate (OSB). This is o-succinylbenzoate synthase from Vibrio cholerae serotype O1 (strain ATCC 39315 / El Tor Inaba N16961).